Reading from the N-terminus, the 573-residue chain is Multidrug and toxin extrusion protein 2 (573 aa).

The Cytoplasmic portion of the chain corresponds to 1-46 (MEPAEDSLGATIQPPELVRVPRGRSLRILLGLRGALSPDVRREAAA). Residues 47–67 (LVALAGPVFLAQLMIFLISIV) traverse the membrane as a helical segment. Residues 68–81 (SSIFCGHLGKVELD) lie on the Extracellular side of the membrane. Residues 82–102 (AVTLAVSVVNVTGISVGTGLA) form a helical membrane-spanning segment. The Cytoplasmic segment spans residues 103 to 122 (SACDTLMSQSFGGKNLKRVG). Residues 123–143 (VILQRGILILLLCCFPCWAIF) form a helical membrane-spanning segment. Residues 144-161 (LNTERLLLLLRQDPDVAR) are Extracellular-facing. The helical transmembrane segment at 162 to 182 (LAQVYVMICIPALPAAFLFQL) threads the bilayer. The Cytoplasmic portion of the chain corresponds to 183 to 196 (QTRYLQSQGIIMPQ). A helical transmembrane segment spans residues 197–217 (VIVGIAANVVNVGMNAFLLYA). At 218-225 (LDLGVVGS) the chain is on the extracellular side. The helical transmembrane segment at 226-246 (AWANTTSQFFLSALLFLYVWW) threads the bilayer. Residues 247–266 (KRIHIHTWGGWTRECFQEWS) lie on the Cytoplasmic side of the membrane. Residues 267-286 (SYTRLAIPSMFMVCIEWWTF) form a helical membrane-spanning segment. Residues 287–304 (EIGTFLAGLVNVTELGAQ) lie on the Extracellular side of the membrane. The helical transmembrane segment at 305-325 (AVIYELASVAYMVPFGFGVAA) threads the bilayer. Topologically, residues 326 to 345 (SVRVGNALGAGNADQARCSC) are cytoplasmic. Residues 346–366 (TTVLLCAGVCALLVGILLAAL) traverse the membrane as a helical segment. Residues 367–379 (KDVVAYIFTNDKD) lie on the Extracellular side of the membrane. A helical transmembrane segment spans residues 380-400 (IISLVSQVMPIFAPFHLFDAL). At 401-415 (AGTCGGVLRGTGKQK) the chain is on the cytoplasmic side. The chain crosses the membrane as a helical span at residues 416-436 (IGAVLNTIGYYGFGFPIGVSL). Residues 437–443 (MFAAKLG) lie on the Extracellular side of the membrane. A helical transmembrane segment spans residues 444 to 464 (IIGLWAGLIVCVSFQAFSYLI). At 465-545 (YILRTNWSRV…VGEVLTGRQL (81 aa)) the chain is on the cytoplasmic side. The helical transmembrane segment at 546–566 (VFYRGMALTVSVAVLIAGIVV) threads the bilayer. Residues 567–573 (RVFNDRG) lie on the Extracellular side of the membrane.

It belongs to the multi antimicrobial extrusion (MATE) (TC 2.A.66.1) family. Expressed in testis; especially in testicular Leydig cells.

The protein resides in the cell membrane. In terms of biological role, multidrug efflux pump that functions as a H(+)/organic cation antiporter. May mediate testosterone efflux from the Leydig cells in the testes. The protein is Multidrug and toxin extrusion protein 2 (Slc47a2) of Mus musculus (Mouse).